The sequence spans 252 residues: Cell division protein ZapD (252 aa).

The protein belongs to the ZapD family. Interacts with FtsZ.

It is found in the cytoplasm. Functionally, cell division factor that enhances FtsZ-ring assembly. Directly interacts with FtsZ and promotes bundling of FtsZ protofilaments, with a reduction in FtsZ GTPase activity. The chain is Cell division protein ZapD from Ralstonia nicotianae (strain ATCC BAA-1114 / GMI1000) (Ralstonia solanacearum).